Here is an 868-residue protein sequence, read N- to C-terminus: Aconitate hydratase B (868 aa).

Substrate-binding positions include Arg-192, 235-237 (SSR), 404-406 (QDT), and Ser-488. Residues Cys-700, Cys-758, and Cys-761 each coordinate [4Fe-4S] cluster. Arg-780 and Arg-785 together coordinate substrate.

This sequence belongs to the aconitase/IPM isomerase family. Monomer. The cofactor is [4Fe-4S] cluster.

It carries out the reaction citrate = D-threo-isocitrate. The catalysed reaction is (2S,3R)-3-hydroxybutane-1,2,3-tricarboxylate = 2-methyl-cis-aconitate + H2O. The protein operates within carbohydrate metabolism; tricarboxylic acid cycle; isocitrate from oxaloacetate: step 2/2. It functions in the pathway organic acid metabolism; propanoate degradation. Its function is as follows. Involved in the catabolism of short chain fatty acids (SCFA) via the tricarboxylic acid (TCA)(acetyl degradation route) and probably via the 2-methylcitrate cycle I (propionate degradation route). Catalyzes the reversible isomerization of citrate to isocitrate via cis-aconitate. Catalyzes the hydration of 2-methyl-cis-aconitate to yield (2R,3S)-2-methylisocitrate. The apo form of AcnB functions as a RNA-binding regulatory protein. This Synechocystis sp. (strain ATCC 27184 / PCC 6803 / Kazusa) protein is Aconitate hydratase B (acnB).